The following is a 465-amino-acid chain: A-type ATP synthase subunit B (465 aa).

The protein belongs to the ATPase alpha/beta chains family. In terms of assembly, the A-type ATPase is composed of subunits A(3), B(3), C, D, E(1 or 2), F, H(2), I and proteolipid K(x).

It is found in the cell membrane. Its function is as follows. Component of the A-type ATP synthase that produces ATP from ADP in the presence of a proton gradient across the membrane. The B chain is a regulatory subunit. The protein is A-type ATP synthase subunit B of Methanocaldococcus jannaschii (strain ATCC 43067 / DSM 2661 / JAL-1 / JCM 10045 / NBRC 100440) (Methanococcus jannaschii).